The sequence spans 464 residues: Protein FAM90A26 (464 aa).

4 disordered regions span residues Met1–Leu42, Pro70–Pro293, Pro312–Gln390, and Ala410–Pro442. Basic and acidic residues-rich tracts occupy residues Gly74–Lys83 and Asn97–Arg114. The span at Ser178–Leu197 shows a compositional bias: low complexity.

This sequence belongs to the FAM90 family.

The chain is Protein FAM90A26 from Homo sapiens (Human).